A 193-amino-acid chain; its full sequence is Major intrinsically disordered NOTCH2-binding receptor 1-like homolog (193 aa).

Phosphoserine is present on S82. A glycan (N-linked (GlcNAc...) asparagine) is linked at N128. A helical membrane pass occupies residues 172–192; the sequence is GLILLLVASILVTIVTLSTIF.

It belongs to the MINAR family. In terms of assembly, interacts with NOTCH2. Widely expressed in the cortex and Purkinje cells of cerebellum. Expressed in the inner ear, mainly in the hair cells, spiral ganglia, the spiral limbus, and the stria vascularis.

The protein localises to the lysosome membrane. It localises to the endoplasmic reticulum membrane. Its function is as follows. Binds cholesterol and may regulate the distribution and homeostasis of cholesterol in hair cells. May play a role in angiogenesis. In Mus musculus (Mouse), this protein is Major intrinsically disordered NOTCH2-binding receptor 1-like homolog.